We begin with the raw amino-acid sequence, 255 residues long: MNDYIVVKCGGSMLDQLNDVFFDCIKKLQQQYKVVIVHGGGPEIDAKLKDCNINVEKRDGLRVTPKEVMDVVQMVLCGSTNKKLVMNLQKHNLLAVGCSGCDGNLLQVQPVSGEIGYVGEVSYVETALLKGLINMNYIPVIAPVGINDNEIYNINADTAAAGIAAALSAKELILITDVDGILHEGKLVKKTDESEIATFIEKGVITGGMIPKVQAALASLKMGVQKISIVNGTKDFTEDTGGCIGTTVTRGVSIV.

Substrate is bound by residues 40–41 (GG), arginine 62, and asparagine 153.

The protein belongs to the acetylglutamate kinase family. ArgB subfamily.

The protein localises to the cytoplasm. The catalysed reaction is N-acetyl-L-glutamate + ATP = N-acetyl-L-glutamyl 5-phosphate + ADP. The protein operates within amino-acid biosynthesis; L-arginine biosynthesis; N(2)-acetyl-L-ornithine from L-glutamate: step 2/4. Functionally, catalyzes the ATP-dependent phosphorylation of N-acetyl-L-glutamate. The chain is Acetylglutamate kinase from Bacillus cereus (strain 03BB102).